The sequence spans 75 residues: Large ribosomal subunit protein uL29 (75 aa).

The protein belongs to the universal ribosomal protein uL29 family.

The protein is Large ribosomal subunit protein uL29 of Pyrobaculum aerophilum (strain ATCC 51768 / DSM 7523 / JCM 9630 / CIP 104966 / NBRC 100827 / IM2).